Reading from the N-terminus, the 176-residue chain is Thiol:disulfide interchange protein HelX (176 aa).

The signal sequence occupies residues 1-19 (MAKPLMFLPLLVMAGFVGA). One can recognise a Thioredoxin domain in the interval 35-172 (ALAGKEAPAV…ITKKIDPLLA (138 aa)). A disulfide bond links cysteine 75 and cysteine 78.

This sequence belongs to the thioredoxin family. DsbE subfamily.

The protein resides in the periplasm. In terms of biological role, required for disulfide bond formation in some periplasmic proteins. Also acts as a disulfide oxidoreductase in cytochromes c biogenesis. The cysteines of apocytochromes c must be in the reduced state for covalent linkage between the two moieties to occur. The sequence is that of Thiol:disulfide interchange protein HelX (helX) from Rhodobacter capsulatus (strain ATCC BAA-309 / NBRC 16581 / SB1003).